Here is a 404-residue protein sequence, read N- to C-terminus: MSHKIMAINAGSSSLKFQLLAMPEGEILCQGIIERIGLADARLVVKTATEKWQEITPVADHREAVTLLLEQLINRKIINSLHDIDATGHRVAHGGETFKDSALVTDDVMAEIERLAELAPLHNPVNLLGINIFRQLLPSAPTIAVFDTAFHQTLEMPAYIYPLPWRYYHELGIRRYGFHGTSHKYVSGKLAEKLGVPLSALRVVCCHLGNGSSVCAIKGGKSVNTSMGFTPQSGVMMGTRSGDIDPSILPWIALREGKTPQELNQLLNNESGLLGVSGVSPDFRDIEQAAENGNQQAQLALALFAERIRATIGSYVLQMGGLDALIFTGGIGENSARARAAICNNLHFLGLSIDADKNQHNATFIQSEQAMVKVAVINTNEELMIARDVMRIALPEPALQEVLA.

The protein belongs to the acetokinase family. PduW subfamily.

It is found in the cytoplasm. It catalyses the reaction propanoate + ATP = propanoyl phosphate + ADP. The protein operates within polyol metabolism; 1,2-propanediol degradation. Its function is as follows. Works with phosphate acetyltransferase (pta) to capture exogenous propionate and regenerate propionyl-CoA during degradation of 1,2-propanediol (1,2-PD). The sequence is that of Propionate kinase from Escherichia fergusonii (strain ATCC 35469 / DSM 13698 / CCUG 18766 / IAM 14443 / JCM 21226 / LMG 7866 / NBRC 102419 / NCTC 12128 / CDC 0568-73).